The primary structure comprises 566 residues: Intracellular exo-alpha-(1-&gt;5)-L-arabinofuranosidase (566 aa).

Polar residues predominate over residues 1-12 (MTTHNSQYSAET). Positions 1–39 (MTTHNSQYSAETTHPDKQESSPAPTAAGTTASNVSTTGN) are disordered. Low complexity predominate over residues 20–32 (SSPAPTAAGTTAS). 3 residues coordinate alpha-L-arabinofuranose: Glu69, Asn114, and Asn214. Residue Glu215 is the Proton donor/acceptor of the active site. Alpha-L-arabinofuranose contacts are provided by Tyr286, Glu340, and Gln409. Glu340 (nucleophile) is an active-site residue.

The protein belongs to the glycosyl hydrolase 51 family. Homohexamer; trimer of dimers.

It is found in the cytoplasm. It carries out the reaction Hydrolysis of terminal non-reducing alpha-L-arabinofuranoside residues in alpha-L-arabinosides.. Its pathway is glycan metabolism; L-arabinan degradation. With respect to regulation, completely inhibited by Hg(2+) and Cu(2+) ions, whereas 1 mM Zn(2+) inhibited activity by 51%. Functionally, involved in the degradation of arabinan and is a key enzyme in the complete degradation of the plant cell wall. Catalyzes the cleavage of terminal alpha-(1-&gt;5)-arabinofuranosyl bonds in different hemicellulosic homopolysaccharides (branched and debranched arabinans). It is active with sugar beet arabinan and wheat arabinoxylan. It also exhibited activity against alpha-(1-&gt;5)-linked arabinobiose, arabinotriose, arabinotetraose, and arabinopentaose. This is Intracellular exo-alpha-(1-&gt;5)-L-arabinofuranosidase (abfB) from Bifidobacterium longum.